A 274-amino-acid polypeptide reads, in one-letter code: uncharacterized protein (274 aa).

Its subcellular location is the plastid. It localises to the chloroplast. This is an uncharacterized protein from Euglena gracilis.